Reading from the N-terminus, the 370-residue chain is MIQSVRIKNFKNFKNTKIDGFTKLNIITGQNNAGKSNLLEALYYLVGKSMHPCTNVLEIYDNIRKEPLTSESKSLMFYGLDTKEEIQIVTTLDNNQTLDLQIKFIASENQKVIESQIIPTAEQTQMSSQLNFTLKKNNEEIYNDHLNIAKVPNFPPIPNQSGYNRQFKNFDSNQLQKLLPFESAVIIPSDVVYRQAHMIQAVSKICSNNQLEEELNKHLNQFDNNIQAISFNTNNQLKLKVKDIKEKVPLSVFGDGLKKYLHIVSAFMADNAKTIYIDEVENGLHFSRMRLLLKNTIDFINNNKDGNLQVFMTTHSQEFIEILDQVIREKDFAHQTKLFCLKQDDQYVIPRTYYGENLEYYFENEENLFG.

The enzyme catalyses ATP + H2O = ADP + phosphate + H(+). It catalyses the reaction GTP + H2O = GDP + phosphate + H(+). Has nucleotide phosphatase activity toward ATP and GTP, but not toward CTP, TTP and ADP. In Helicobacter pylori (strain ATCC 700392 / 26695) (Campylobacter pylori), this protein is ATP/GTP phosphatase.